A 179-amino-acid polypeptide reads, in one-letter code: NADH-quinone oxidoreductase subunit B 1 (179 aa).

The [4Fe-4S] cluster site is built by C38, C39, C104, and C133.

It belongs to the complex I 20 kDa subunit family. In terms of assembly, NDH-1 is composed of 14 different subunits. Subunits NuoB, C, D, E, F, and G constitute the peripheral sector of the complex. Requires [4Fe-4S] cluster as cofactor.

The protein resides in the cell membrane. The catalysed reaction is a quinone + NADH + 5 H(+)(in) = a quinol + NAD(+) + 4 H(+)(out). Functionally, NDH-1 shuttles electrons from NADH, via FMN and iron-sulfur (Fe-S) centers, to quinones in the respiratory chain. The immediate electron acceptor for the enzyme in this species is believed to be ubiquinone. Couples the redox reaction to proton translocation (for every two electrons transferred, four hydrogen ions are translocated across the cytoplasmic membrane), and thus conserves the redox energy in a proton gradient. This chain is NADH-quinone oxidoreductase subunit B 1, found in Herpetosiphon aurantiacus (strain ATCC 23779 / DSM 785 / 114-95).